An 83-amino-acid polypeptide reads, in one-letter code: MASPIPVGVTKEQAFSMAQTEMEYRVELFNKLAQTCFNKCVDKRYKEAELNMGENSCIDRCVSKYWQVNGMVGQLLSAGKPPV.

At A2 the chain carries N-acetylalanine. The short motif at 36-61 (CFNKCVDKRYKEAELNMGENSCIDRC) is the Twin CX3C motif element. 2 disulfide bridges follow: C36–C61 and C40–C57.

This sequence belongs to the small Tim family. Heterohexamer; composed of 3 copies of TIM9 and 3 copies of TIM10, named soluble 70 kDa complex. The complex associates with the TIM22 component of the TIM22 complex. Interacts with multi-pass transmembrane proteins in transit. As to expression, expressed in roots, flowers, young cotyledons and leaves.

It localises to the mitochondrion intermembrane space. Mitochondrial intermembrane chaperone that participates in the import and insertion of multi-pass transmembrane proteins into the mitochondrial inner membrane. May also be required for the transfer of beta-barrel precursors from the TOM complex to the sorting and assembly machinery (SAM complex) of the outer membrane. Acts as a chaperone-like protein that protects the hydrophobic precursors from aggregation and guide them through the mitochondrial intermembrane space. This Arabidopsis thaliana (Mouse-ear cress) protein is Mitochondrial import inner membrane translocase subunit TIM10 (TIM10).